Here is a 1953-residue protein sequence, read N- to C-terminus: MTTRLDRLVVLLDSGSTSVVRETAAKQIGDIQKVHPDELYNLLGRVVPYLKSKNWDTRVAAAKAIGGIVENVPVWNPNRTSPVKKEETEDLPSFNGDTEEKPFIKTEEGAPASSQSQVVVSSNLTSNSEVSKLEEERLSTRSHSQEIKPIVDFGPDEETAKELNTELKGKFENSLLSFESFDIANVLKAGKKLLGSASRDYDVNPANYSTHYLQQLSNLKSRLDLAGEYLDDSIMNDLGDNVGSNSKGSPTTSIPEHKTSINNNKPEDTPTPSENVHLSARQRNALKRKARQMKNSQKVRVIDVAPTLVHQQNSTSSADKKTGADYNFTAQSRSDRLVVEHKAPIVPSAAVAVTSDSVWPFETLVELLLIDMFDPSWEIRHGACMGLREIIRYAGFGYGRVVGKSEAENEQLNKKYFDDLLCRIACVFALDRFGDYLADQVVAPIRESVSQVLGVALIYVPNDSVFSMYKVLHSLVFQNELGLTNTVWEAAHGGMLGIKYLVAVKYPLFFSHSDYLDSLINTVIHGLANHDDDVRAVSALTLLPIADKLVQEKLSSCKNLLKVLWDCLDDVKDDLSSSTSCVMDLLSSLCSFTEVMNLMQETANSDPEFSFETLVPRLFHLMRYTLTGVRRSVVYALTKFISVQTSCSWITGLTLRLCFQNVLLEQQEDISKSSCELAQRVMDILYRDGPESFSKLLYSHIEPMLKVSITPIGSFRRPYPLDTTLIVKPSGQPYAPSTSRERNNNISELSNSRTKHRAKDDPKGSFCFSVDEPMLNGDVEFVGEERMLKARLRASSLLGRIIGRWKRDEILLFFKPFLQACLTSSFSTPVVLGSRLIESFFEVEDNDLTIQKDELYHLLCDQFATVPRENYANLVSQLHVVRAQCNALLNTFLDVGRLSRSKIPSLAVVVKGDPEAGPIAFGIADAEKLVGPTYENLCKLLSPSQKAQSSKALNEIKYLIIDEISIYKIAKERQDIQCSASIASAMVTYDKLPKKLNSIIKGIMESIKKEQFSCLQMHSASAMMKLISACYKESRQVISEKIVRNLCAYVCMDTTETPIFHDSGKNGILSLHSIGTSDDNDEQVSGKLVDDSDDVSNDRKSSLSSVSDKDAAVLQRMGAQLTLQQMAQNFGSSLFSRVPVLSQCLFVPLQQYAESGFPSEVDQASCTVGQDLLDAMSILRFLVAYLDSGLQSEIVSTLPHLLATLQSNYSAVRNMASKCFAAITESNAAGSKALHLLVEDVVPLLGDASSTIHRQGAIECIYHVVQRLGVRILPYILYLIIPLLGRMSDADQDVRVLATTSFATLVKLVPLEAGLPDPPDLPQYLLDSREKERKFLEQMLNPSKVEAFSIPVPISADLRKYQQEGVNWLAFLNKYELHGILCDDMGLGKTLQTICIVASDHYNRQKLFEESGSPKFAHVPSLIVCPSTLAGHWQQELSTYAPFLKVSAYVGPPAERAKIRSKMKKSDVVVTSYDICRNDVDELVKIDWNYCVLDEGHVIKNARAKLTKAVKSLRSYHRLILSGTPIQNNVLELWSLFDFLMPGFLGTEKTFQERFVRPIAASRDAKSSSKERERGTLALEAIHKQVLPFMLRRLKEDVLADLPPKIIQDYYCDMSDLQRKLLNDFVSQLNINEELEDDETEKTQGTRKKKSQKAHIFQALQYMRKLCNHPALILTEKHPKRNAIVKQLAKENSGLHDLKHAPKLTALGQLLRDCGLGNSSVNSNGIDSALTNAVSEHRVLIFCQLKDMLDMVEKDLLQATMPDVTYMRLDGSVEPTKRQEAVTKFNNDPSIDVLLLTTHVGGLGLNLTGADTVIFVEHDWNPMRDLQAMDRAHRIGQKKVVNVYRLITRGCLEEKIMGLQRFKMNVASTVVNQQNAGLSSIGTDQILDLFNTTADEQQTVQNIDKEESEDAAGRGLSGTSKKALEGLPEMWDESQYDEFNLDGFISTLPKDAS.

One copy of the HEAT 1 repeat lies at 36 to 74; the sequence is PDELYNLLGRVVPYLKSKNWDTRVAAAKAIGGIVENVPV. The tract at residues 79–141 is disordered; it reads RTSPVKKEET…KLEEERLSTR (63 aa). Residues 98–108 show a composition bias toward basic and acidic residues; it reads TEEKPFIKTEE. A compositionally biased stretch (low complexity) spans 113–130; that stretch reads SSQSQVVVSSNLTSNSEV. A compositionally biased stretch (basic and acidic residues) spans 131–141; that stretch reads SKLEEERLSTR. Ser-144 carries the phosphoserine modification. The interval 240 to 278 is disordered; the sequence is DNVGSNSKGSPTTSIPEHKTSINNNKPEDTPTPSENVHL. Residues 242–276 show a composition bias toward polar residues; it reads VGSNSKGSPTTSIPEHKTSINNNKPEDTPTPSENV. HEAT repeat units follow at residues 358–396, 513–551, 554–592, and 608–646; these read VWPF…YAGF, SDYL…KLVQ, LSSC…LCSF, and EFSF…VQTS. 2 disordered regions span residues 730–762 and 1078–1103; these read SGQP…KDDP and DDND…KSSL. HEAT repeat units follow at residues 1191–1229 and 1270–1311; these read QSEI…SNAA and VRIL…LVPL. Residues 1370–1543 form the Helicase ATP-binding domain; it reads AFLNKYELHG…WSLFDFLMPG (174 aa). Residue 1383-1390 coordinates ATP; sequence DDMGLGKT. A DEGH box motif is present at residues 1494-1497; sequence DEGH. One copy of the HEAT 8 repeat lies at 1580–1623; sequence EAIHKQVLPFMLRRLKEDVLADLPPKIIQDYYCDMSDLQRKLLN. Residues 1725-1877 form the Helicase C-terminal domain; sequence GIDSALTNAV…STVVNQQNAG (153 aa). Positions 1901 to 1920 are disordered; the sequence is QNIDKEESEDAAGRGLSGTS.

Belongs to the SNF2/RAD54 helicase family. Forms a complex with TBP which binds TATA DNA.

The protein localises to the nucleus. Regulates transcription in association with TATA binding protein (TBP). Removes TBP from the TATA box via its ATPase activity. This Schizosaccharomyces pombe (strain 972 / ATCC 24843) (Fission yeast) protein is TATA-binding protein-associated factor mot1.